A 209-amino-acid chain; its full sequence is Small ribosomal subunit protein uS3 (209 aa).

In terms of domain architecture, KH type-2 spans 38–107 (IRKIIKNKYY…RVVINIEEIK (70 aa)).

It belongs to the universal ribosomal protein uS3 family. In terms of assembly, part of the 30S ribosomal subunit. Forms a tight complex with proteins S10 and S14.

Binds the lower part of the 30S subunit head. Binds mRNA in the 70S ribosome, positioning it for translation. This Thermotoga maritima (strain ATCC 43589 / DSM 3109 / JCM 10099 / NBRC 100826 / MSB8) protein is Small ribosomal subunit protein uS3.